The following is a 177-amino-acid chain: Large ribosomal subunit protein uL6 (177 aa).

It belongs to the universal ribosomal protein uL6 family. In terms of assembly, part of the 50S ribosomal subunit.

Its function is as follows. This protein binds to the 23S rRNA, and is important in its secondary structure. It is located near the subunit interface in the base of the L7/L12 stalk, and near the tRNA binding site of the peptidyltransferase center. This chain is Large ribosomal subunit protein uL6, found in Citrobacter koseri (strain ATCC BAA-895 / CDC 4225-83 / SGSC4696).